The chain runs to 193 residues: Holliday junction branch migration complex subunit RuvA (193 aa).

The interval 1–64 (MIGRIAGILL…EDAHLLYGFL (64 aa)) is domain I. Positions 65–139 (TPQERTTFRE…GKLGADLGAL (75 aa)) are domain II. A flexible linker region spans residues 139 to 143 (LAGAA). The tract at residues 144–193 (SQSDHAADILNALVALGYSEKEGLAAIKNVPAGTGVSEGIKLALKALSKV) is domain III.

Belongs to the RuvA family. In terms of assembly, homotetramer. Forms an RuvA(8)-RuvB(12)-Holliday junction (HJ) complex. HJ DNA is sandwiched between 2 RuvA tetramers; dsDNA enters through RuvA and exits via RuvB. An RuvB hexamer assembles on each DNA strand where it exits the tetramer. Each RuvB hexamer is contacted by two RuvA subunits (via domain III) on 2 adjacent RuvB subunits; this complex drives branch migration. In the full resolvosome a probable DNA-RuvA(4)-RuvB(12)-RuvC(2) complex forms which resolves the HJ.

It is found in the cytoplasm. Functionally, the RuvA-RuvB-RuvC complex processes Holliday junction (HJ) DNA during genetic recombination and DNA repair, while the RuvA-RuvB complex plays an important role in the rescue of blocked DNA replication forks via replication fork reversal (RFR). RuvA specifically binds to HJ cruciform DNA, conferring on it an open structure. The RuvB hexamer acts as an ATP-dependent pump, pulling dsDNA into and through the RuvAB complex. HJ branch migration allows RuvC to scan DNA until it finds its consensus sequence, where it cleaves and resolves the cruciform DNA. The polypeptide is Holliday junction branch migration complex subunit RuvA (Burkholderia ambifaria (strain ATCC BAA-244 / DSM 16087 / CCUG 44356 / LMG 19182 / AMMD) (Burkholderia cepacia (strain AMMD))).